The primary structure comprises 283 residues: Pantothenate synthetase (283 aa).

Residue 30–37 (MGYYHAGH) coordinates ATP. H37 acts as the Proton donor in catalysis. Residue Q61 coordinates (R)-pantoate. Residue Q61 participates in beta-alanine binding. ATP is bound at residue 147-150 (GQKD). Q153 contributes to the (R)-pantoate binding site. ATP contacts are provided by residues V176 and 184–187 (MSSR).

The protein belongs to the pantothenate synthetase family. In terms of assembly, homodimer.

It is found in the cytoplasm. The catalysed reaction is (R)-pantoate + beta-alanine + ATP = (R)-pantothenate + AMP + diphosphate + H(+). It participates in cofactor biosynthesis; (R)-pantothenate biosynthesis; (R)-pantothenate from (R)-pantoate and beta-alanine: step 1/1. In terms of biological role, catalyzes the condensation of pantoate with beta-alanine in an ATP-dependent reaction via a pantoyl-adenylate intermediate. This Nitratidesulfovibrio vulgaris (strain ATCC 29579 / DSM 644 / CCUG 34227 / NCIMB 8303 / VKM B-1760 / Hildenborough) (Desulfovibrio vulgaris) protein is Pantothenate synthetase.